Reading from the N-terminus, the 152-residue chain is MSSQQQKQPCTVPPQLHQHEVKQPCQPPPQEPCAPKTKEPCHPIPEPCNPKVPEPCQPKVPEPCQPKVPEPCQPKVPEPCQPKVPEPCQPKVPEPCQPKVPEPCHPKAPEPCHPVVPEPCQPVAPEPCQPVVPEPCPPTVTPSPYQQKTKQK.

The interval 20–40 (EVKQPCQPPPQEPCAPKTKEP) is disordered. Repeat copies occupy residues 27–34 (PPPQEPCA), 35–42 (PKTKEPCH), 43–49 (PIPEPCN), 50–57 (PKVPEPCQ), 58–65 (PKVPEPCQ), 66–73 (PKVPEPCQ), 74–81 (PKVPEPCQ), 82–89 (PKVPEPCQ), 90–97 (PKVPEPCQ), 98–105 (PKVPEPCH), 106–113 (PKAPEPCH), 114–121 (PVVPEPCQ), 122–129 (PVAPEPCQ), and 130–137 (PVVPEPCP). The interval 27-137 (PPPQEPCAPK…CQPVVPEPCP (111 aa)) is 14 X 8 AA approximate tandem repeats.

This sequence belongs to the cornifin (SPRR) family. In terms of tissue distribution, in squamous epithelia lining the nasal vestibule and in the hard palate.

It localises to the cytoplasm. Its function is as follows. Cross-linked envelope protein of keratinocytes. It is a keratinocyte protein that first appears in the cell cytosol, but ultimately becomes cross-linked to membrane proteins by transglutaminase. All that results in the formation of an insoluble envelope beneath the plasma membrane. This is Cornifin-A (Sprr1a) from Rattus norvegicus (Rat).